A 185-amino-acid polypeptide reads, in one-letter code: TATA-box-binding protein (185 aa).

2 consecutive repeat copies span residues 3–78 (IQNI…REDL) and 94–176 (IQNI…AEKI).

The protein belongs to the TBP family.

In terms of biological role, general factor that plays a role in the activation of archaeal genes transcribed by RNA polymerase. Binds specifically to the TATA box promoter element which lies close to the position of transcription initiation. The protein is TATA-box-binding protein of Methanopyrus kandleri (strain AV19 / DSM 6324 / JCM 9639 / NBRC 100938).